The following is a 144-amino-acid chain: Maximins z/Hv (144 aa).

Residues 1–18 (MNFKYIVAVSFLIASGYA) form the signal peptide. Positions 19 to 43 (RSEENDVQSLSQREVLEEESLREIR) are excised as a propeptide. At Asn70 the chain carries Asparagine amide. Positions 74–123 (TAEDHEVMKRLKAVMRDLDSLDHPEEASERETRGFNQEEIANLFTKKEKR) are excised as a propeptide. Ile143 carries the post-translational modification Isoleucine amide.

Belongs to the bombinin family. As to expression, expressed by the skin glands.

Its subcellular location is the secreted. Its function is as follows. Maximin-z shows antimicrobial activity against bacteria and against the fungus C.albicans. It has little hemolytic activity. Functionally, maximin-Hv shows antimicrobial activity against bacteria and against the fungus C.albicans. Shows strong hemolytic activity. The sequence is that of Maximins z/Hv from Bombina maxima (Giant fire-bellied toad).